A 483-amino-acid chain; its full sequence is UDP-N-acetylmuramoylalanine--D-glutamate ligase (483 aa).

119–125 (GTNGKTT) lines the ATP pocket.

It belongs to the MurCDEF family.

It localises to the cytoplasm. The enzyme catalyses UDP-N-acetyl-alpha-D-muramoyl-L-alanine + D-glutamate + ATP = UDP-N-acetyl-alpha-D-muramoyl-L-alanyl-D-glutamate + ADP + phosphate + H(+). It functions in the pathway cell wall biogenesis; peptidoglycan biosynthesis. Functionally, cell wall formation. Catalyzes the addition of glutamate to the nucleotide precursor UDP-N-acetylmuramoyl-L-alanine (UMA). This Mycolicibacterium vanbaalenii (strain DSM 7251 / JCM 13017 / BCRC 16820 / KCTC 9966 / NRRL B-24157 / PYR-1) (Mycobacterium vanbaalenii) protein is UDP-N-acetylmuramoylalanine--D-glutamate ligase.